Reading from the N-terminus, the 335-residue chain is ATP-dependent 6-phosphofructokinase (335 aa).

Glycine 11 is an ATP binding site. 21 to 25 (RAVVR) is a binding site for ADP. ATP contacts are provided by residues 72–73 (RY) and 102–105 (GDGS). Aspartate 103 contributes to the Mg(2+) binding site. 125–127 (TID) contributes to the substrate binding site. The active-site Proton acceptor is aspartate 127. Arginine 154 is an ADP binding site. Substrate is bound by residues arginine 162 and 169-171 (MGR). ADP contacts are provided by residues 185–187 (GAD) and 213–215 (KKH). Residues glutamate 222, arginine 244, and 250 to 253 (HIQR) each bind substrate.

The protein belongs to the phosphofructokinase type A (PFKA) family. ATP-dependent PFK group I subfamily. Prokaryotic clade 'B1' sub-subfamily. Homotetramer. It depends on Mg(2+) as a cofactor.

It is found in the cytoplasm. The catalysed reaction is beta-D-fructose 6-phosphate + ATP = beta-D-fructose 1,6-bisphosphate + ADP + H(+). The protein operates within carbohydrate degradation; glycolysis; D-glyceraldehyde 3-phosphate and glycerone phosphate from D-glucose: step 3/4. With respect to regulation, allosterically activated by ADP and other diphosphonucleosides, and allosterically inhibited by phosphoenolpyruvate. Catalyzes the phosphorylation of D-fructose 6-phosphate to fructose 1,6-bisphosphate by ATP, the first committing step of glycolysis. This is ATP-dependent 6-phosphofructokinase from Streptococcus pneumoniae (strain CGSP14).